The chain runs to 210 residues: Homeobox protein Rhox5 (210 aa).

The interval 1 to 119 (MEAEGSSRKV…GNPGGRQMPL (119 aa)) is disordered. Residues 17-30 (GVKEDSEEQHDVKA) are compositionally biased toward basic and acidic residues. Gly residues predominate over residues 47–79 (GQPGVGAVGTEGEGEELNGGKGHFGPGAPGPMG). Positions 117–175 (MPLQGSRFAQHRLRELESILQRTNSFDVPREDLDRLMDACVSRVQNWFKIRRAAARRTR) form a DNA-binding region, homeobox; atypical.

The protein localises to the nucleus. Functionally, transcription factor required for differentiation of embryonic stem cells (ESCs) into primordial germ cells. This is Homeobox protein Rhox5 (Rhox5) from Mus musculus (Mouse).